Here is a 537-residue protein sequence, read N- to C-terminus: Protoporphyrinogen oxidase 1, chloroplastic (537 aa).

A chloroplast-targeting transit peptide spans 1-34 (MELSLLRPTTQSLLPSFSKPNLRLNVYKPLRLRC). S35 carries the N-acetylserine modification. FAD is bound by residues 63–68 (GGGISG), 90–91 (EA), and 112–115 (GPNS). Positions 256-268 (RKNAPKAERDPRL) are enriched in basic and acidic residues. The disordered stretch occupies residues 256 to 275 (RKNAPKAERDPRLPKPQGQT). Residue 511-513 (VAL) participates in FAD binding.

It belongs to the protoporphyrinogen/coproporphyrinogen oxidase family. Protoporphyrinogen oxidase subfamily. It depends on FAD as a cofactor. In terms of tissue distribution, expressed at high levels in the leaves and at low levels in the roots and floral buds.

It is found in the plastid. The protein localises to the chloroplast. It carries out the reaction protoporphyrinogen IX + 3 O2 = protoporphyrin IX + 3 H2O2. It functions in the pathway porphyrin-containing compound metabolism; protoporphyrin-IX biosynthesis; protoporphyrin-IX from protoporphyrinogen-IX: step 1/1. It participates in porphyrin-containing compound metabolism; chlorophyll biosynthesis. Inhibited by acifluorfen. Catalyzes the 6-electron oxidation of protoporphyrinogen-IX to form protoporphyrin-IX. This is Protoporphyrinogen oxidase 1, chloroplastic (PPOX1) from Arabidopsis thaliana (Mouse-ear cress).